The sequence spans 490 residues: Tryptophan decarboxylase (490 aa).

Residue lysine 306 is modified to N6-(pyridoxal phosphate)lysine.

The protein belongs to the group II decarboxylase family. In terms of assembly, homodimer. Pyridoxal 5'-phosphate serves as cofactor.

Its subcellular location is the cytoplasm. The catalysed reaction is L-tryptophan + H(+) = tryptamine + CO2. With respect to regulation, inhibited by (S)-alpha-fluoromethyltryptophan. Catalyzes the decarboxylation of tryptophan to tryptamine. Tryptamine is a neurotransmitter that induces the release of serotonin, which is suggested to modulate gastrointestinal motility. Therefore, the tryptophan decarboxylase from the gut bacteria Ruminococcus gnavus (strain ATCC 29149 / VPI C7-9) may influence host brain and behavior. Has weak activity with tyrosine and phenylalanine. This Mediterraneibacter gnavus (strain ATCC 29149 / DSM 114966 / JCM 6515 / VPI C7-9) (Ruminococcus gnavus) protein is Tryptophan decarboxylase.